The sequence spans 386 residues: Heat-inducible transcription repressor HrcA (386 aa).

It belongs to the HrcA family.

Negative regulator of class I heat shock genes (grpE-dnaK-dnaJ and groELS operons). Prevents heat-shock induction of these operons. In Chlamydia abortus (strain DSM 27085 / S26/3) (Chlamydophila abortus), this protein is Heat-inducible transcription repressor HrcA.